The chain runs to 1101 residues: Coiled-coil domain-containing protein 150 (1101 aa).

4 coiled-coil regions span residues 106-299, 398-680, 712-940, and 970-1033; these read RLES…DLTS, AAHA…KEDN, DSEI…NYEQ, and VRNK…EAHR. The segment covering 1055–1071 has biased composition (basic and acidic residues); the sequence is SGEDRWQEKDQDVKHDV. The disordered stretch occupies residues 1055–1101; it reads SGEDRWQEKDQDVKHDVMSNQSVLHRWERKQNLRPMPKKYHSEVQRK.

This Homo sapiens (Human) protein is Coiled-coil domain-containing protein 150 (CCDC150).